The chain runs to 374 residues: MNFEIHNEEIDHKLEAYDYILDETLIANKPSKVRHESRLMIVRDSSLEEDFTTNKYTKNLLDELRKGDLVVVNDTKVMKARLKVELENGKLVELLVLEKADQSTWLCLARPAKKLKINSQLNLKSSLAKDIKLHISGTDKETGGRFIKFPENINDLISMNNLLDIYGETPLPPYIKSAEEESFHENSYQTEYASNPGAVAAPTAGLHLSKSLISNLKKKGILVMPITLHVGYGTFKPIDQEDLSNLKLHKEWVRVSSEVVEEIKRVKKTDRRVIAIGTTSVRALESCYSYEMGDLIPIDKYVDLVIKPGYKFKVVDGLLTNFHLPKSSLLLLVSAMIGRERLLNLYKKAIREKFRFFSYGDAMYISPDSFLVKK.

Belongs to the QueA family.

It is found in the cytoplasm. The enzyme catalyses 7-aminomethyl-7-carbaguanosine(34) in tRNA + S-adenosyl-L-methionine = epoxyqueuosine(34) in tRNA + adenine + L-methionine + 2 H(+). Its pathway is tRNA modification; tRNA-queuosine biosynthesis. In terms of biological role, synthesizes oQ from preQ1 in a single S-adenosylmethionine-requiring step. The ribosyl moiety of AdoMet is transferred and isomerized to the epoxycyclopentane residue of oQ. The sequence is that of S-adenosylmethionine:tRNA ribosyltransferase-isomerase (queA) from Prochlorococcus marinus subsp. pastoris (strain CCMP1986 / NIES-2087 / MED4).